The chain runs to 102 residues: uncharacterized protein (102 aa).

The signal sequence occupies residues 1 to 22; that stretch reads MKFKYGATLFSGFLGLSAILAA. Cys-23 carries N-palmitoyl cysteine lipidation. The S-diacylglycerol cysteine moiety is linked to residue Cys-23.

This sequence belongs to the MG185/MG260 family.

The protein localises to the cell membrane. This is an uncharacterized protein from Mycoplasma pneumoniae (strain ATCC 29342 / M129 / Subtype 1) (Mycoplasmoides pneumoniae).